A 630-amino-acid polypeptide reads, in one-letter code: Probable potassium transport system protein Kup (630 aa).

A run of 12 helical transmembrane segments spans residues 17 to 37 (LAIA…LYSL), 51 to 71 (PSAI…VVGI), 105 to 125 (ITGL…GDAV), 144 to 164 (PQLS…LFWI), 175 to 195 (LFGP…IYHI), 218 to 238 (VLLA…AEAL), 255 to 275 (YVLV…LLLL), 283 to 303 (PFFL…STVA), 344 to 364 (IYVP…VIGF), 374 to 394 (YGIA…VVMV), 402 to 422 (LLVA…FGAN), and 428 to 448 (QGGW…MTWY).

This sequence belongs to the HAK/KUP transporter (TC 2.A.72) family.

The protein localises to the cell inner membrane. It catalyses the reaction K(+)(in) + H(+)(in) = K(+)(out) + H(+)(out). Its function is as follows. Transport of potassium into the cell. Likely operates as a K(+):H(+) symporter. The polypeptide is Probable potassium transport system protein Kup (Burkholderia pseudomallei (strain 1710b)).